Here is a 276-residue protein sequence, read N- to C-terminus: Ribosomal RNA large subunit methyltransferase E (276 aa).

S-adenosyl-L-methionine-binding residues include Gly-52, Phe-54, Asp-72, Asp-90, and Asp-114. The Proton acceptor role is filled by Lys-154. A compositionally biased stretch (low complexity) spans 203 to 249; it reads RAAPTANATPTPTSTSTSTPTSTSTPTSTSTSTPAPTLTQTQTQTPK. Residues 203–276 are disordered; that stretch reads RAAPTANATP…AKTGASRRTR (74 aa). A compositionally biased stretch (basic residues) spans 265-276; the sequence is AKAKTGASRRTR.

It belongs to the class I-like SAM-binding methyltransferase superfamily. RNA methyltransferase RlmE family.

It localises to the cytoplasm. It carries out the reaction uridine(2552) in 23S rRNA + S-adenosyl-L-methionine = 2'-O-methyluridine(2552) in 23S rRNA + S-adenosyl-L-homocysteine + H(+). Specifically methylates the uridine in position 2552 of 23S rRNA at the 2'-O position of the ribose in the fully assembled 50S ribosomal subunit. The sequence is that of Ribosomal RNA large subunit methyltransferase E from Anaeromyxobacter sp. (strain Fw109-5).